Reading from the N-terminus, the 837-residue chain is Histone acetyltransferase KAT2A (837 aa).

Residues 1 to 99 are disordered; sequence MAEPSQAPTP…RKAQVRGLPR (99 aa). An N-acetylalanine modification is found at Ala2. The segment covering 7-51 has biased composition (pro residues); the sequence is APTPAPAAQPRPLQSPAPAPTPTPAPSPASAPIPTPTPAPAPAPA. Residues 58 to 74 show a composition bias toward gly residues; the sequence is TGTGGPGVGSGGAGSGG. Over residues 75-87 the composition is skewed to low complexity; it reads DPARPGLSQQQRA. Residues 88-99 show a composition bias toward basic residues; sequence SQRKAQVRGLPR. Ser307 is modified (phosphoserine). The disordered stretch occupies residues 407–434; it reads FSPSMGGGSNSSLSLDSAGAEPMPGEKR. Residues 416-425 show a composition bias toward low complexity; that stretch reads NSSLSLDSAG. The N-acetyltransferase domain maps to 503–656; the sequence is VIGNSLTPKA…GATLMECELN (154 aa). Lys549 carries the post-translational modification N6-acetyllysine. Residue Glu575 is the Proton donor/acceptor of the active site. Acetyl-CoA-binding positions include 579 to 581, 586 to 592, and Tyr617; these read CAV and QVKGYGT. Succinyl-CoA-binding positions include 579–581, 586–592, and Tyr617; these read CAV and QVKGYGT. The interval 639 to 648 is loop 3; it reads LGYIKDYEGA. Lys728 is covalently cross-linked (Glycyl lysine isopeptide (Lys-Gly) (interchain with G-Cter in SUMO2)). The Bromo domain maps to 728–832; the sequence is KDPDQLYTTL…KFFYFKLKEG (105 aa). Thr735 is modified (phosphothreonine). Glycyl lysine isopeptide (Lys-Gly) (interchain with G-Cter in SUMO2) cross-links involve residues Lys759 and Lys791.

The protein belongs to the acetyltransferase family. GCN5 subfamily. Homooligomer; may form a tetramer of homodimers. Interacts with EP300, CREBBP and ADA2. Component of the TFTC-HAT complex, at least composed of TAF5L, TAF6L, TAF3, TADA3L, SUPT3H/SPT3, TAF2/TAFII150, TAF4/TAFII135, TAF5/TAFII100, KAT2A/GCN5L2, TAF10 and TRRAP. Component of the STAGA transcription coactivator-HAT complex, at least composed of SUPT3H, KAT2A, SUPT7L, TAF5L, TAF6L, TADA3L, TAD1L, TAF10, TAF12, TRRAP and TAF9. The STAGA core complex is associated with a subcomplex required for histone deubiquitination composed of ATXN7L3, ENY2 and USP22. Component of the ADA2A-containing complex (ATAC), composed of KAT14, KAT2A, TADA2L, TADA3L, ZZ3, MBIP, WDR5, YEATS2, CCDC101 and DR1. In the complex, it probably interacts directly with KAT14, MBIP and WDR5. Interacts with PML. Interacts with CEBPB. Interacts with TACC1, TACC2 and TACC3. Interacts with RELA. Interacts with NFATC2. Interacts with TBX5. Interacts with PLK4. Associates with the 2-oxoglutarate dehydrogenase complex. Interacts with XPC; leading to KAT2A recruitment to promoters and subsequent acetylation of histones. Interacts with ERCC3/XPB; leading to KAT2A recruitment to promoters and subsequent acetylation of histones. Interacts with ISL1. Interactions of ISL1 with MLIP1 or KAT2A may be mutually exclusive. In terms of assembly, (Microbial infection) Interacts with and acetylates HIV-1 Tat. Post-translationally, acetylated at Lys-549, inhibiting the protein acetyltransferase activity. Deacetylation at Lys-549 by SIRT6 promotes phosphorylation at Ser-307 and Thr-735 and subsequent activation of the protein acetyltransferase activity, leading to acetylation and inactivation of PPARGC1A. As to expression, expressed in all tissues tested.

The protein localises to the nucleus. The protein resides in the chromosome. It is found in the cytoplasm. It localises to the cytoskeleton. Its subcellular location is the microtubule organizing center. The protein localises to the centrosome. It carries out the reaction L-lysyl-[histone] + acetyl-CoA = N(6)-acetyl-L-lysyl-[histone] + CoA + H(+). It catalyses the reaction L-lysyl-[protein] + acetyl-CoA = N(6)-acetyl-L-lysyl-[protein] + CoA + H(+). The enzyme catalyses succinyl-CoA + L-lysyl-[protein] = N(6)-succinyl-L-lysyl-[protein] + CoA + H(+). The catalysed reaction is glutaryl-CoA + L-lysyl-[protein] = N(6)-glutaryl-L-lysyl-[protein] + CoA + H(+). In terms of biological role, protein lysine acyltransferase that can act as a acetyltransferase, glutaryltransferase, succinyltransferase or malonyltransferase, depending on the context. Acts as a histone lysine succinyltransferase: catalyzes succinylation of histone H3 on 'Lys-79' (H3K79succ), with a maximum frequency around the transcription start sites of genes. Succinylation of histones gives a specific tag for epigenetic transcription activation. Association with the 2-oxoglutarate dehydrogenase complex, which provides succinyl-CoA, is required for histone succinylation. In different complexes, functions either as an acetyltransferase (HAT) or as a succinyltransferase: in the SAGA and ATAC complexes, acts as a histone acetyltransferase. Has significant histone acetyltransferase activity with core histones, but not with nucleosome core particles. Has a a strong preference for acetylation of H3 at 'Lys-9' (H3K9ac). Acetylation of histones gives a specific tag for epigenetic transcription activation. Recruited by the XPC complex at promoters, where it specifically mediates acetylation of histone variant H2A.Z.1/H2A.Z, thereby promoting expression of target genes. Involved in long-term memory consolidation and synaptic plasticity: acts by promoting expression of a hippocampal gene expression network linked to neuroactive receptor signaling. Acts as a positive regulator of T-cell activation: upon TCR stimulation, recruited to the IL2 promoter following interaction with NFATC2 and catalyzes acetylation of histone H3 at 'Lys-9' (H3K9ac), leading to promote IL2 expression. Required for growth and differentiation of craniofacial cartilage and bone by regulating acetylation of histone H3 at 'Lys-9' (H3K9ac). Regulates embryonic stem cell (ESC) pluripotency and differentiation. Also acetylates non-histone proteins, such as CEBPB, MRE11, PPARGC1A, PLK4 and TBX5. Involved in heart and limb development by mediating acetylation of TBX5, acetylation regulating nucleocytoplasmic shuttling of TBX5. Acts as a negative regulator of centrosome amplification by mediating acetylation of PLK4. Acts as a negative regulator of gluconeogenesis by mediating acetylation and subsequent inactivation of PPARGC1A. Also acts as a histone glutaryltransferase: catalyzes glutarylation of histone H4 on 'Lys-91' (H4K91glu), a mark that destabilizes nucleosomes by promoting dissociation of the H2A-H2B dimers from nucleosomes. (Microbial infection) In case of HIV-1 infection, it is recruited by the viral protein Tat. Regulates Tat's transactivating activity and may help inducing chromatin remodeling of proviral genes. The polypeptide is Histone acetyltransferase KAT2A (Homo sapiens (Human)).